The primary structure comprises 278 residues: UPF0276 protein Sama_1305 (278 aa).

It belongs to the UPF0276 family.

The protein is UPF0276 protein Sama_1305 of Shewanella amazonensis (strain ATCC BAA-1098 / SB2B).